A 707-amino-acid polypeptide reads, in one-letter code: Translation initiation factor IF-2 (707 aa).

Basic and acidic residues predominate over residues 55 to 80 (LAEKPKEEKQKDQKNHEQEAQDKEEK). The segment at 55-88 (LAEKPKEEKQKDQKNHEQEAQDKEEKEIEEDSFY) is disordered. In terms of domain architecture, tr-type G spans 209–378 (PRPPIVTVMG…LLVAEMEDLK (170 aa)). The segment at 218–225 (GHVDHGKT) is G1. 218–225 (GHVDHGKT) contributes to the GTP binding site. The interval 243-247 (GITQH) is G2. The tract at residues 264–267 (DTPG) is G3. GTP-binding positions include 264 to 268 (DTPGH) and 318 to 321 (NKID). Residues 318-321 (NKID) are G4. The G5 stretch occupies residues 354-356 (SAK).

Belongs to the TRAFAC class translation factor GTPase superfamily. Classic translation factor GTPase family. IF-2 subfamily.

The protein localises to the cytoplasm. One of the essential components for the initiation of protein synthesis. Protects formylmethionyl-tRNA from spontaneous hydrolysis and promotes its binding to the 30S ribosomal subunits. Also involved in the hydrolysis of GTP during the formation of the 70S ribosomal complex. In Caldanaerobacter subterraneus subsp. tengcongensis (strain DSM 15242 / JCM 11007 / NBRC 100824 / MB4) (Thermoanaerobacter tengcongensis), this protein is Translation initiation factor IF-2.